Reading from the N-terminus, the 126-residue chain is Aspartate 1-decarboxylase (126 aa).

Ser-25 acts as the Schiff-base intermediate with substrate; via pyruvic acid in catalysis. Ser-25 is subject to Pyruvic acid (Ser). Thr-57 provides a ligand contact to substrate. The active-site Proton donor is Tyr-58. A substrate-binding site is contributed by 73–75; it reads GGA.

It belongs to the PanD family. As to quaternary structure, heterooctamer of four alpha and four beta subunits. The cofactor is pyruvate. Post-translationally, is synthesized initially as an inactive proenzyme, which is activated by self-cleavage at a specific serine bond to produce a beta-subunit with a hydroxyl group at its C-terminus and an alpha-subunit with a pyruvoyl group at its N-terminus.

It localises to the cytoplasm. It carries out the reaction L-aspartate + H(+) = beta-alanine + CO2. Its pathway is cofactor biosynthesis; (R)-pantothenate biosynthesis; beta-alanine from L-aspartate: step 1/1. In terms of biological role, catalyzes the pyruvoyl-dependent decarboxylation of aspartate to produce beta-alanine. The chain is Aspartate 1-decarboxylase from Xylella fastidiosa (strain 9a5c).